The chain runs to 253 residues: 3-dehydroquinate dehydratase (253 aa).

3-dehydroquinate is bound by residues 46 to 48 (EWR) and Arg82. His143 acts as the Proton donor/acceptor in catalysis. Lys170 serves as the catalytic Schiff-base intermediate with substrate. 3-dehydroquinate contacts are provided by Arg213, Ser232, and Gln236.

This sequence belongs to the type-I 3-dehydroquinase family. In terms of assembly, homodimer.

It catalyses the reaction 3-dehydroquinate = 3-dehydroshikimate + H2O. It functions in the pathway metabolic intermediate biosynthesis; chorismate biosynthesis; chorismate from D-erythrose 4-phosphate and phosphoenolpyruvate: step 3/7. In terms of biological role, involved in the third step of the chorismate pathway, which leads to the biosynthesis of aromatic amino acids. Catalyzes the cis-dehydration of 3-dehydroquinate (DHQ) and introduces the first double bond of the aromatic ring to yield 3-dehydroshikimate. This chain is 3-dehydroquinate dehydratase, found in Bacillus velezensis (strain DSM 23117 / BGSC 10A6 / LMG 26770 / FZB42) (Bacillus amyloliquefaciens subsp. plantarum).